The sequence spans 332 residues: Cell growth regulator with RING finger domain protein 1 (332 aa).

An RING-type zinc finger spans residues Cys-274–Arg-309.

Ubiquitously expressed with high expression in testis and the cerebellum.

The protein resides in the nucleus. The protein localises to the endoplasmic reticulum. In terms of biological role, able to inhibit growth in several cell lines. The sequence is that of Cell growth regulator with RING finger domain protein 1 (CGRRF1) from Homo sapiens (Human).